Reading from the N-terminus, the 391-residue chain is S-adenosylmethionine synthase (391 aa).

Residues 1 to 20 (MPRSDYLFTSESVSEGHPDK) are disordered. ATP is bound at residue His17. Asp19 serves as a coordination point for Mg(2+). K(+) is bound at residue Glu45. The L-methionine site is built by Glu58 and Gln102. The flexible loop stretch occupies residues 102–112 (QSADIAQGVDA). ATP is bound by residues 169–171 (DAK), 235–236 (KF), Asp244, 250–251 (RK), Ala267, and Lys271. Asp244 is a binding site for L-methionine. L-methionine is bound at residue Lys275.

It belongs to the AdoMet synthase family. As to quaternary structure, homotetramer; dimer of dimers. The cofactor is Mg(2+). Requires K(+) as cofactor.

The protein localises to the cytoplasm. The enzyme catalyses L-methionine + ATP + H2O = S-adenosyl-L-methionine + phosphate + diphosphate. It participates in amino-acid biosynthesis; S-adenosyl-L-methionine biosynthesis; S-adenosyl-L-methionine from L-methionine: step 1/1. Functionally, catalyzes the formation of S-adenosylmethionine (AdoMet) from methionine and ATP. The overall synthetic reaction is composed of two sequential steps, AdoMet formation and the subsequent tripolyphosphate hydrolysis which occurs prior to release of AdoMet from the enzyme. This Methylorubrum extorquens (strain CM4 / NCIMB 13688) (Methylobacterium extorquens) protein is S-adenosylmethionine synthase.